A 435-amino-acid polypeptide reads, in one-letter code: 3-phosphoshikimate 1-carboxyvinyltransferase (435 aa).

Positions 21, 22, and 26 each coordinate 3-phosphoshikimate. Position 21 (Lys-21) interacts with phosphoenolpyruvate. Phosphoenolpyruvate is bound by residues Gly-99 and Arg-127. Residues Ser-173, Gln-175, Asp-323, and Lys-350 each coordinate 3-phosphoshikimate. A phosphoenolpyruvate-binding site is contributed by Gln-175. Residue Asp-323 is the Proton acceptor of the active site. Phosphoenolpyruvate contacts are provided by Arg-354 and Arg-396.

The protein belongs to the EPSP synthase family. In terms of assembly, monomer.

It is found in the cytoplasm. It catalyses the reaction 3-phosphoshikimate + phosphoenolpyruvate = 5-O-(1-carboxyvinyl)-3-phosphoshikimate + phosphate. Its pathway is metabolic intermediate biosynthesis; chorismate biosynthesis; chorismate from D-erythrose 4-phosphate and phosphoenolpyruvate: step 6/7. In terms of biological role, catalyzes the transfer of the enolpyruvyl moiety of phosphoenolpyruvate (PEP) to the 5-hydroxyl of shikimate-3-phosphate (S3P) to produce enolpyruvyl shikimate-3-phosphate and inorganic phosphate. This Akkermansia muciniphila (strain ATCC BAA-835 / DSM 22959 / JCM 33894 / BCRC 81048 / CCUG 64013 / CIP 107961 / Muc) protein is 3-phosphoshikimate 1-carboxyvinyltransferase.